The chain runs to 351 residues: Adenine deaminase (351 aa).

Positions 19, 21, and 208 each coordinate Zn(2+). Catalysis depends on glutamate 211, which acts as the Proton donor. Residue aspartate 288 coordinates Zn(2+). Aspartate 289 contacts substrate.

The protein belongs to the metallo-dependent hydrolases superfamily. Adenosine and AMP deaminases family. Adenine deaminase type 2 subfamily. It depends on Zn(2+) as a cofactor.

Its subcellular location is the cytoplasm. The protein localises to the nucleus. The enzyme catalyses adenine + H2O + H(+) = hypoxanthine + NH4(+). Catalyzes the hydrolytic deamination of adenine to hypoxanthine. Plays an important role in the purine salvage pathway and in nitrogen catabolism. In Aspergillus oryzae (strain ATCC 42149 / RIB 40) (Yellow koji mold), this protein is Adenine deaminase (aah1).